Here is a 176-residue protein sequence, read N- to C-terminus: ATP-dependent protease subunit HslV (176 aa).

Residue threonine 6 is part of the active site. 3 residues coordinate Na(+): serine 161, cysteine 164, and threonine 167.

It belongs to the peptidase T1B family. HslV subfamily. In terms of assembly, a double ring-shaped homohexamer of HslV is capped on each side by a ring-shaped HslU homohexamer. The assembly of the HslU/HslV complex is dependent on binding of ATP.

The protein localises to the cytoplasm. It catalyses the reaction ATP-dependent cleavage of peptide bonds with broad specificity.. Allosterically activated by HslU binding. Protease subunit of a proteasome-like degradation complex believed to be a general protein degrading machinery. In Thermosipho africanus (strain TCF52B), this protein is ATP-dependent protease subunit HslV.